Here is a 254-residue protein sequence, read N- to C-terminus: Alcohol dehydrogenase 2 (254 aa).

10–33 serves as a coordination point for NAD(+); that stretch reads FVAGLGGIGFDTSREIVKRGPKNL. Serine 138 is a substrate binding site. The Proton acceptor role is filled by tyrosine 151.

It belongs to the short-chain dehydrogenases/reductases (SDR) family. Homodimer.

The catalysed reaction is a primary alcohol + NAD(+) = an aldehyde + NADH + H(+). The enzyme catalyses a secondary alcohol + NAD(+) = a ketone + NADH + H(+). This is Alcohol dehydrogenase 2 (Adh2) from Drosophila mojavensis (Fruit fly).